A 599-amino-acid polypeptide reads, in one-letter code: Aspartate--tRNA(Asp/Asn) ligase (599 aa).

Residue glutamate 174 participates in L-aspartate binding. Positions 198-201 are aspartate; it reads QLFK. Arginine 220 provides a ligand contact to L-aspartate. Residues 220–222 and glutamine 229 each bind ATP; that span reads RDE. Histidine 457 is a binding site for L-aspartate. Glutamate 491 provides a ligand contact to ATP. L-aspartate is bound at residue arginine 498. 543 to 546 contacts ATP; it reads GLDR.

This sequence belongs to the class-II aminoacyl-tRNA synthetase family. Type 1 subfamily. Homodimer.

The protein localises to the cytoplasm. It carries out the reaction tRNA(Asx) + L-aspartate + ATP = L-aspartyl-tRNA(Asx) + AMP + diphosphate. In terms of biological role, aspartyl-tRNA synthetase with relaxed tRNA specificity since it is able to aspartylate not only its cognate tRNA(Asp) but also tRNA(Asn). Reaction proceeds in two steps: L-aspartate is first activated by ATP to form Asp-AMP and then transferred to the acceptor end of tRNA(Asp/Asn). This chain is Aspartate--tRNA(Asp/Asn) ligase, found in Paraburkholderia phytofirmans (strain DSM 17436 / LMG 22146 / PsJN) (Burkholderia phytofirmans).